The sequence spans 447 residues: ATP-dependent protease ATPase subunit HslU (447 aa).

Residues isoleucine 18, 60–65, aspartate 259, glutamate 325, and arginine 397 each bind ATP; that span reads GVGKTE.

It belongs to the ClpX chaperone family. HslU subfamily. As to quaternary structure, a double ring-shaped homohexamer of HslV is capped on each side by a ring-shaped HslU homohexamer. The assembly of the HslU/HslV complex is dependent on binding of ATP.

It localises to the cytoplasm. In terms of biological role, ATPase subunit of a proteasome-like degradation complex; this subunit has chaperone activity. The binding of ATP and its subsequent hydrolysis by HslU are essential for unfolding of protein substrates subsequently hydrolyzed by HslV. HslU recognizes the N-terminal part of its protein substrates and unfolds these before they are guided to HslV for hydrolysis. The polypeptide is ATP-dependent protease ATPase subunit HslU (Burkholderia pseudomallei (strain 668)).